A 178-amino-acid polypeptide reads, in one-letter code: Deoxycytidylate deaminase (178 aa).

Residues 14–145 (EWPEYFMAVA…DEATAARLLF (132 aa)) enclose the CMP/dCMP-type deaminase domain. A Zn(2+)-binding site is contributed by histidine 84. Glutamate 86 acts as the Proton donor in catalysis. Residues cysteine 110 and cysteine 113 each coordinate Zn(2+). Residue serine 174 is modified to Phosphoserine.

Belongs to the cytidine and deoxycytidylate deaminase family. In terms of assembly, homohexamer. It depends on Zn(2+) as a cofactor.

The enzyme catalyses dCMP + H2O + H(+) = dUMP + NH4(+). It carries out the reaction 5-hydroxymethyl-dCMP + H2O + H(+) = 5-hydroxymethyl-dUMP + NH4(+). Its activity is regulated as follows. Allosteric enzyme whose activity is greatly influenced by the end products of its metabolic pathway, dCTP and dTTP. Its function is as follows. Catalyzes the deamination of dCMP to dUMP, providing the nucleoside monophosphate substrate for the thymidylate synthase/TYMS. Also, part of a nucleotide salvage pathway that eliminates epigenetically modified 5-hydroxymethyl-dCMP (hmdCMP) in a two-step process entailing deamination to cytotoxic 5-hydroxymethyl-dUMP (hmdUMP), followed by its hydrolysis into 5-hydroxymethyluracil (hmU) and 2-deoxy-D-ribose 5-phosphate (deoxyribosephosphate). Catalyzes the first step in that pathway, the deamination of 5-hydroxymethyl-dCMP (hmdCMP). The polypeptide is Deoxycytidylate deaminase (Homo sapiens (Human)).